A 119-amino-acid chain; its full sequence is uncharacterized protein (119 aa).

A signal peptide spans Met-1–Gly-30.

This is an uncharacterized protein from Escherichia coli (strain UTI89 / UPEC).